The chain runs to 118 residues: Ribonuclease P protein component (118 aa).

This sequence belongs to the RnpA family. As to quaternary structure, consists of a catalytic RNA component (M1 or rnpB) and a protein subunit.

The enzyme catalyses Endonucleolytic cleavage of RNA, removing 5'-extranucleotides from tRNA precursor.. Its function is as follows. RNaseP catalyzes the removal of the 5'-leader sequence from pre-tRNA to produce the mature 5'-terminus. It can also cleave other RNA substrates such as 4.5S RNA. The protein component plays an auxiliary but essential role in vivo by binding to the 5'-leader sequence and broadening the substrate specificity of the ribozyme. The protein is Ribonuclease P protein component of Rickettsia canadensis (strain McKiel).